The sequence spans 302 residues: MIALLAPGQGSQTEGMLSPWLQLPGAADQIAAWSKAADLDLARLGTTASTEEITDTAVAQPLIVAATLLAHQELARRCVLAGKDVIVAGHSVGEIAAYAIAGVIAADDAVALAATRGAEMAKACATEPTGMSAVLGGDETEVLSRLEQLDLVPANRNAAGQIVAAGRLTALEKLAEDPPAKARVRALGVAGAFHTEFMAPALDGFAAAAANIATADPTATLLSNRDGKPVTSAAAAMDTLVSQLTQPVRWDLCTATLREHTVTAIVEFPPAGTLSGIAKRELRGVPARAVKSPADLDELANL.

Catalysis depends on residues Ser-91 and His-194.

The protein belongs to the FabD family.

It catalyses the reaction holo-[ACP] + malonyl-CoA = malonyl-[ACP] + CoA. It functions in the pathway lipid metabolism; fatty acid biosynthesis. The polypeptide is Malonyl CoA-acyl carrier protein transacylase (fabD) (Mycobacterium bovis (strain ATCC BAA-935 / AF2122/97)).